The chain runs to 331 residues: Ferredoxin--NADP reductase (331 aa).

FAD contacts are provided by Glu-34, Gln-42, Tyr-47, Val-87, Phe-121, Asp-285, and Thr-325.

It belongs to the ferredoxin--NADP reductase type 2 family. As to quaternary structure, homodimer. The cofactor is FAD.

The enzyme catalyses 2 reduced [2Fe-2S]-[ferredoxin] + NADP(+) + H(+) = 2 oxidized [2Fe-2S]-[ferredoxin] + NADPH. This chain is Ferredoxin--NADP reductase, found in Lactiplantibacillus plantarum (strain ATCC BAA-793 / NCIMB 8826 / WCFS1) (Lactobacillus plantarum).